The sequence spans 196 residues: MSDENPLQPPWLNAPPVDSYPYEESHDLRTGPKLHPTLDGLLPYIGVWRGRGRGGYPTIEDFDFAQEIRISHDGRPFLCYESRAWLLDEQSRPIRPAGREMGWWRPVLDGDRATNEWEALMSTPTGVMELHLGKRTGTQLEFATDAVVRTPTAKEVTAGHRLFGIVEGALLYAQEMAAVGHGLTPHLSARLIRVGG.

The GXWXGXG motif lies at 46–52 (GVWRGRG). H186 contacts heme b.

Belongs to the nitrobindin family. Homodimer. Heme b serves as cofactor.

The enzyme catalyses peroxynitrite = nitrate. It functions in the pathway nitrogen metabolism. Functionally, heme-binding protein able to scavenge peroxynitrite and to protect free L-tyrosine against peroxynitrite-mediated nitration, by acting as a peroxynitrite isomerase that converts peroxynitrite to nitrate. Therefore, this protein likely plays a role in peroxynitrite sensing and in the detoxification of reactive nitrogen and oxygen species (RNS and ROS, respectively). Is able to bind nitric oxide (NO) in vitro, but may act as a sensor of peroxynitrite levels in vivo. The protein is Peroxynitrite isomerase of Salinispora tropica (strain ATCC BAA-916 / DSM 44818 / JCM 13857 / NBRC 105044 / CNB-440).